A 528-amino-acid polypeptide reads, in one-letter code: MNENHIQSDHMNNTIHVTNKKLPNFLLSVRLKYVKLGYHYLISNAVYILILPVGLLAATSSSFSLTDLTLLYNHLLKFHFLSSTLFAALLIFLTTLYFTTRPRRIFLLDFACYKPDSSLICTRETFMDRSQRVGIFTEDNLAFQQKILERSGLGQKTYFPEALLRVPPNPCMSEARKEAETVMFGAIDAVLEKTGVNPKDIGILVVNCSLFNPTPSLSAMIVNKYKLRGNVLSYNLGGMGCSAGLISIDLAKQLLQVQPNSYALVVSTENITLNWYLGNDRSMLLSNCIFRMGGAAVLLSNRSSDRCRSKYQLIHTVRTHKGSDDNAFNCVYQREDNDDNKQIGVSLSKNLMAIAGEALKTNITTLGPLVLPMSEQLLFFATLVARKVFNVKKIKPYIPDFKLAFEHFCIHAGGRAVLDEIEKNLDLSEWHMEPSRMTLNRFGNTSSSSLWYELAYSEAKGRIKRGDRTWQIAFGSGFKCNSAVWRALRTIDPSKEKKKKTNPWIDEIHEFPVPVPRTSPVTSSSESR.

The next 2 membrane-spanning stretches (helical) occupy residues 36-56 and 78-98; these read LGYHYLISNAVYILILPVGLL and FHFLSSTLFAALLIFLTTLYF. The region spanning 97 to 388 is the FAE domain; it reads YFTTRPRRIF…FFATLVARKV (292 aa). Catalysis depends on residues C241, H320, H407, H411, and N444.

Belongs to the thiolase-like superfamily. Chalcone/stilbene synthases family. In terms of tissue distribution, expressed in siliques, flowers and stems. In young seedlings, expressed in the central cylinder of primary roots, in emerging lateral roots and in their root cap, but not in aboveground tissues such as hypocotyls, cotyledons and leaves. Expressed in sepals in mature flowers and in the chalaza and micropyle region of developing seeds shortly prior to or just after the detachment from the funiculus. Expressed in roots, flowers, cauline leaves and siliques.

The protein localises to the membrane. It carries out the reaction a very-long-chain acyl-CoA + malonyl-CoA + H(+) = a very-long-chain 3-oxoacyl-CoA + CO2 + CoA. Its pathway is lipid metabolism; fatty acid biosynthesis. Inhibited by K3 herbicides such as allidochlor, anilofos, cafenstrole and flufenacet. Strongly inhibited by metazachlor. Functionally, mediates the synthesis of VLCFAs from 22 to 26 carbons in length (e.g. C22, C24, C26). Involved in the elongation of C20 fatty acid suberin precursors. Functionally redundant with KCS20 in the two-carbon elongation of C22 fatty acids that is required for cuticular wax and root suberin biosynthesis. The chain is 3-ketoacyl-CoA synthase 2 from Arabidopsis thaliana (Mouse-ear cress).